A 119-amino-acid polypeptide reads, in one-letter code: Large ribosomal subunit protein bL20 (119 aa).

It belongs to the bacterial ribosomal protein bL20 family.

Functionally, binds directly to 23S ribosomal RNA and is necessary for the in vitro assembly process of the 50S ribosomal subunit. It is not involved in the protein synthesizing functions of that subunit. This Gluconacetobacter diazotrophicus (strain ATCC 49037 / DSM 5601 / CCUG 37298 / CIP 103539 / LMG 7603 / PAl5) protein is Large ribosomal subunit protein bL20.